A 1212-amino-acid polypeptide reads, in one-letter code: MRSRNQGGESSSNGHVSCPKSSIISSDGGKGPSEDAKKNKANRKEEDVMASGTIKRHLKPSGESEKKTKKSVELSKEDLIQLLSIMEGELQAREDVIHMLRTEKTKPEVLEAHYGSAEPEKVLRVLHRDAILAQEKSIGEDVYEKPISELDRLEEKQKETYRRMLEQLLLAEKCHRRTVYELENEKHKHTDYMNKSDDFTNLLEQERERLKKLLEQEKAYQARKEKENAKRLNKLRDELVKLKSFALMLVDERQMHIEQLGLQSQKVQDLTQKLREEEEKLKAVTYKSKEDRQKLLKLEVDFEHKASRFSQEHEEMNAKLANQESHNRQLRLKLVGLSQRIEELEETNKSLQKAEEELQELREKIAKGECGNSSLMAEVESLRKRVLEMEGKDEEITKTEAQCRELKKKLQEEEHHSKELRLEVEKLQKRMSELEKLEEAFSRSKSECTQLHLNLEKEKNLTKDLLNELEVVKSRVKELECSESRLEKAELSLKDDLTKLKSFTVMLVDERKNMMEKIKQEERKVDGLNKNFKVEQGKVMDVTEKLIEESKKLLKLKSEMEEKEYSLTKERDELMGKLRSEEERSCELSCSVDLLKKRLDGIEEVEREINRGRSCKGSEFTCPEDNKIRELTLEIERLKKRLQQLEVVEGDLMKTEDEYDQLEQKFRTEQDKANFLSQQLEEIKHQMAKHKAIEKGEAVSQEAELRHRFRLEEAKSRDLQAEVQALKEKIHELMNKEDQLSQLQVDYSVLQQRFMEEETKNKNMGREVLNLTKELELSKRYSRALRPSGNGRRMVDVPVASTGVQTEAVCGDAAEEETPAVFIRKSFQEENHIMSNLRQVGLKKPMERSSVLDRYPPAANELTMRKSWIPWMRKRENGPSTPQEKGPRPNQGAGHPGELVLAPKQGQPLHIRVTPDHENSTATLEITSPTSEEFFSSTTVIPTLGNQKPRITIIPSPNVMSQKPKSADPTLGPERAMSPVTITTISREKSPEGGRSAFADRPASPIQIMTVSTSAAPTEIAVSPESQEVPMGRTILKVTPEKQTVPAPVRKYNSNANIITTEDNKIHIHLGSQFKRSPGPAAEGVSPVITVRPVNVTAEKEVSTGTVLRSPRNHLSSRPGASKVTSTITITPVTTSSTRGTQSVSGQDGSSQRPTPTRIPMSKGMKAGKPVVAASGAGNLTKFQPRAETQSMKIELKKSAASSTASLGGGKG.

Positions 1-15 (MRSRNQGGESSSNGH) are enriched in polar residues. Positions 1-73 (MRSRNQGGES…SEKKTKKSVE (73 aa)) are disordered. Composition is skewed to basic and acidic residues over residues 32 to 47 (PSED…KEED) and 60 to 73 (PSGE…KSVE). Position 137 is a phosphoserine (Ser137). 2 coiled-coil regions span residues 191–575 (DYMN…DELM) and 623–777 (PEDN…ELEL). 2 disordered regions span residues 871-898 (WMRK…HPGE) and 948-975 (KPRI…GPER). At Ser978 the chain carries Phosphoserine. Positions 1102 to 1190 (VSTGTVLRSP…TKFQPRAETQ (89 aa)) are disordered. The span at 1124 to 1138 (VTSTITITPVTTSST) shows a compositional bias: low complexity. Residues 1139 to 1155 (RGTQSVSGQDGSSQRPT) show a composition bias toward polar residues.

The protein belongs to the FILIP1 family. In terms of assembly, interacts with FLNA. Interacts with RHOD (in GTP-bound form). Expressed in muscle tissue, including heart. Found in cortical ventricular zone.

The protein localises to the cytoplasm. It is found in the cytoskeleton. The protein resides in the stress fiber. By acting through a filamin-A/F-actin axis, it controls the start of neocortical cell migration from the ventricular zone. May be able to induce the degradation of Filamin A. The protein is Filamin-A-interacting protein 1 (Filip1) of Rattus norvegicus (Rat).